Consider the following 307-residue polypeptide: Pantothenate kinase (307 aa).

90-97 (GSVAVGKS) is a binding site for ATP.

It belongs to the prokaryotic pantothenate kinase family.

Its subcellular location is the cytoplasm. It carries out the reaction (R)-pantothenate + ATP = (R)-4'-phosphopantothenate + ADP + H(+). The protein operates within cofactor biosynthesis; coenzyme A biosynthesis; CoA from (R)-pantothenate: step 1/5. The protein is Pantothenate kinase of Limosilactobacillus fermentum (strain NBRC 3956 / LMG 18251) (Lactobacillus fermentum).